We begin with the raw amino-acid sequence, 228 residues long: Ribosomal RNA small subunit methyltransferase G (228 aa).

S-adenosyl-L-methionine-binding positions include G89, L94, 140-141 (VE), and R159.

The protein belongs to the methyltransferase superfamily. RNA methyltransferase RsmG family.

It is found in the cytoplasm. The catalysed reaction is guanosine(527) in 16S rRNA + S-adenosyl-L-methionine = N(7)-methylguanosine(527) in 16S rRNA + S-adenosyl-L-homocysteine. Specifically methylates the N7 position of guanine in position 527 of 16S rRNA. The sequence is that of Ribosomal RNA small subunit methyltransferase G from Burkholderia cenocepacia (strain HI2424).